The sequence spans 258 residues: MNRINQLFSTKQKDILSIYFCAGFPTLEGTASTIKVLEKKGINMIEIGIPFSDPMADGPVIQHAATRALKNGMTLKLLFDQLKDIRKEVQIPLVLMGYLNPIMQYGFKDFCRTCRETGIDGVIIPDLPFKDYMEEYRSIAEEQDVRIIMLITPETSEERIRLIDEHTDGFIYMVSSAAITGAQKDFNAQKQAYFQRIADMNLRNPRMIGFGISNKQTFETASAHAAGAIIGSKFVTLLDEEDGDTEKAADKLLEALKN.

Active-site proton acceptor residues include E46 and D57.

This sequence belongs to the TrpA family. As to quaternary structure, tetramer of two alpha and two beta chains.

The catalysed reaction is (1S,2R)-1-C-(indol-3-yl)glycerol 3-phosphate + L-serine = D-glyceraldehyde 3-phosphate + L-tryptophan + H2O. Its pathway is amino-acid biosynthesis; L-tryptophan biosynthesis; L-tryptophan from chorismate: step 5/5. Its function is as follows. The alpha subunit is responsible for the aldol cleavage of indoleglycerol phosphate to indole and glyceraldehyde 3-phosphate. In Phocaeicola vulgatus (strain ATCC 8482 / DSM 1447 / JCM 5826 / CCUG 4940 / NBRC 14291 / NCTC 11154) (Bacteroides vulgatus), this protein is Tryptophan synthase alpha chain.